Reading from the N-terminus, the 254-residue chain is Imidazole glycerol phosphate synthase subunit HisF (254 aa).

Active-site residues include Asp12 and Asp131.

It belongs to the HisA/HisF family. As to quaternary structure, heterodimer of HisH and HisF.

Its subcellular location is the cytoplasm. The catalysed reaction is 5-[(5-phospho-1-deoxy-D-ribulos-1-ylimino)methylamino]-1-(5-phospho-beta-D-ribosyl)imidazole-4-carboxamide + L-glutamine = D-erythro-1-(imidazol-4-yl)glycerol 3-phosphate + 5-amino-1-(5-phospho-beta-D-ribosyl)imidazole-4-carboxamide + L-glutamate + H(+). It participates in amino-acid biosynthesis; L-histidine biosynthesis; L-histidine from 5-phospho-alpha-D-ribose 1-diphosphate: step 5/9. In terms of biological role, IGPS catalyzes the conversion of PRFAR and glutamine to IGP, AICAR and glutamate. The HisF subunit catalyzes the cyclization activity that produces IGP and AICAR from PRFAR using the ammonia provided by the HisH subunit. This is Imidazole glycerol phosphate synthase subunit HisF from Frankia casuarinae (strain DSM 45818 / CECT 9043 / HFP020203 / CcI3).